The primary structure comprises 644 residues: 1,4-alpha-glucan branching enzyme GlgB (644 aa).

Aspartate 309 serves as the catalytic Nucleophile. Glutamate 362 acts as the Proton donor in catalysis.

This sequence belongs to the glycosyl hydrolase 13 family. GlgB subfamily. In terms of assembly, monomer.

It carries out the reaction Transfers a segment of a (1-&gt;4)-alpha-D-glucan chain to a primary hydroxy group in a similar glucan chain.. It participates in glycan biosynthesis; glycogen biosynthesis. In terms of biological role, catalyzes the formation of the alpha-1,6-glucosidic linkages in glycogen by scission of a 1,4-alpha-linked oligosaccharide from growing alpha-1,4-glucan chains and the subsequent attachment of the oligosaccharide to the alpha-1,6 position. This Cutibacterium acnes (strain DSM 16379 / KPA171202) (Propionibacterium acnes) protein is 1,4-alpha-glucan branching enzyme GlgB.